The sequence spans 179 residues: Large ribosomal subunit protein uL6 (179 aa).

This sequence belongs to the universal ribosomal protein uL6 family. In terms of assembly, part of the 50S ribosomal subunit.

Its function is as follows. This protein binds to the 23S rRNA, and is important in its secondary structure. It is located near the subunit interface in the base of the L7/L12 stalk, and near the tRNA binding site of the peptidyltransferase center. This is Large ribosomal subunit protein uL6 from Spiroplasma kunkelii.